Reading from the N-terminus, the 171-residue chain is Large ribosomal subunit protein uL10 (171 aa).

Belongs to the universal ribosomal protein uL10 family. In terms of assembly, part of the ribosomal stalk of the 50S ribosomal subunit. The N-terminus interacts with L11 and the large rRNA to form the base of the stalk. The C-terminus forms an elongated spine to which L12 dimers bind in a sequential fashion forming a multimeric L10(L12)X complex.

Functionally, forms part of the ribosomal stalk, playing a central role in the interaction of the ribosome with GTP-bound translation factors. The chain is Large ribosomal subunit protein uL10 from Sphingopyxis alaskensis (strain DSM 13593 / LMG 18877 / RB2256) (Sphingomonas alaskensis).